Here is a 278-residue protein sequence, read N- to C-terminus: UPF0276 protein Swit_4400 (278 aa).

Belongs to the UPF0276 family.

In Rhizorhabdus wittichii (strain DSM 6014 / CCUG 31198 / JCM 15750 / NBRC 105917 / EY 4224 / RW1) (Sphingomonas wittichii), this protein is UPF0276 protein Swit_4400.